Here is a 483-residue protein sequence, read N- to C-terminus: PAT complex subunit CCDC47 (483 aa).

A signal peptide spans 1–20 (MKAFYAFCVVLLVFGSVSEA). Residues 21–135 (KFDDFEDEED…PAHLQNSWES (115 aa)) lie on the Cytoplasmic side of the membrane. The interval 46–119 (MEDSVTESPQ…DTSSNKNKDP (74 aa)) is disordered. A compositionally biased stretch (acidic residues) spans 60–104 (TEDDEDEATVELEGQDESQEGDFEDADTQEGDTESEPYDDEEFEG). The segment covering 105–118 (YEDKPDTSSNKNKD) has biased composition (basic and acidic residues). A helical transmembrane segment spans residues 136–156 (YYLEILMVTGLLAYIMNYIIG). At 157–483 (KNKNSRLAQA…KMKQIKVKAM (327 aa)) the chain is on the lumenal side. N-linked (GlcNAc...) asparagine glycosylation occurs at N178. The disordered stretch occupies residues 424 to 483 (QRQEAAQSRREEKKRAEKERIMNEEDPEKQRRLEEAALRREQKKLEKKQMKMKQIKVKAM). Residues 430-472 (QSRREEKKRAEKERIMNEEDPEKQRRLEEAALRREQKKLEKKQ) show a composition bias toward basic and acidic residues. Residues 450 to 483 (PEKQRRLEEAALRREQKKLEKKQMKMKQIKVKAM) are a coiled coil. Positions 473–483 (MKMKQIKVKAM) are enriched in basic residues.

This sequence belongs to the CCDC47 family. As to quaternary structure, component of the PAT complex, composed of WDR83OS/Asterix and CCDC47. The PAT complex is part of the multi-pass translocon (MPT) complex, composed of three subcomplexes, the GEL complex (composed of RAB5IF/OPTI and TMCO1), the BOS complex (composed of NCLN/Nicalin, NOMO1 and TMEM147) and the PAT complex (composed of WDR83OS/Asterix and CCDC47). The MPT complex associates with the SEC61 complex. Interacts with VCP, HSPA5, DERL1, DERL2 and SELENOS. As to expression, in the embryo, expressed in the endodermal layer of the yolk sac and in the small intestine.

The protein resides in the endoplasmic reticulum membrane. Its subcellular location is the rough endoplasmic reticulum membrane. Functionally, component of the multi-pass translocon (MPT) complex that mediates insertion of multi-pass membrane proteins into the lipid bilayer of membranes. The MPT complex takes over after the SEC61 complex: following membrane insertion of the first few transmembrane segments of proteins by the SEC61 complex, the MPT complex occludes the lateral gate of the SEC61 complex to promote insertion of subsequent transmembrane regions. Within the MPT complex, the PAT subcomplex sequesters any highly polar regions in the transmembrane domains away from the non-polar membrane environment until they can be buried in the interior of the fully assembled protein. Within the PAT subcomplex, CCDC47 occludes the lateral gate of the SEC61 complex. Involved in the regulation of calcium ion homeostasis in the ER. Required for proper protein degradation via the ERAD (ER-associated degradation) pathway. Has an essential role in the maintenance of ER organization during embryogenesis. This is PAT complex subunit CCDC47 from Mus musculus (Mouse).